The chain runs to 141 residues: VLTHEDCELLQQTWEKVLGHQEDFGAEALERMFITYPQTKTYFPHFDLHHGSEQIRNHGRKVVNALGEAVKNMDHMSTASGELSNLHAYNLRVDPVNFKLLSECFEVVLAVHLKDQYTPDVHRAYDKFLSAVGDMLAEKYR.

Residues 1–141 form the Globin domain; sequence VLTHEDCELL…VGDMLAEKYR (141 aa). His58 and His87 together coordinate heme b.

It belongs to the globin family. As to quaternary structure, there are three forms of hemoglobin in Sphenodon: A, A' and D. Hb A is a tetramer of two alpha-A and two beta-1, Hb A' is a tetramer of two alpha-a and two beta-2, Hb D is a tetramer of two alpha-D and two beta-2. Red blood cells.

Its function is as follows. Involved in oxygen transport from the lung to the various peripheral tissues. This is Hemoglobin subunit alpha-D (HBAD) from Sphenodon punctatus (Tuatara).